We begin with the raw amino-acid sequence, 504 residues long: Ribosomal protein uS12 methylthiotransferase RimO (504 aa).

In terms of domain architecture, MTTase N-terminal spans 19-135 (KKVGFVSLGC…ILAASGIEPR (117 aa)). [4Fe-4S] cluster-binding residues include Cys-28, Cys-64, Cys-98, Cys-214, Cys-218, and Cys-221. The Radical SAM core domain occupies 200–430 (ATPKYMAYIK…MSLQKQISKK (231 aa)). The 72-residue stretch at 433 to 504 (KALIGREFDV…HDYDLVARLL (72 aa)) folds into the TRAM domain.

This sequence belongs to the methylthiotransferase family. RimO subfamily. It depends on [4Fe-4S] cluster as a cofactor.

It is found in the cytoplasm. It carries out the reaction L-aspartate(89)-[ribosomal protein uS12]-hydrogen + (sulfur carrier)-SH + AH2 + 2 S-adenosyl-L-methionine = 3-methylsulfanyl-L-aspartate(89)-[ribosomal protein uS12]-hydrogen + (sulfur carrier)-H + 5'-deoxyadenosine + L-methionine + A + S-adenosyl-L-homocysteine + 2 H(+). In terms of biological role, catalyzes the methylthiolation of an aspartic acid residue of ribosomal protein uS12. This Koribacter versatilis (strain Ellin345) protein is Ribosomal protein uS12 methylthiotransferase RimO.